We begin with the raw amino-acid sequence, 177 residues long: ATP synthase subunit delta (177 aa).

The protein belongs to the ATPase delta chain family. As to quaternary structure, F-type ATPases have 2 components, F(1) - the catalytic core - and F(0) - the membrane proton channel. F(1) has five subunits: alpha(3), beta(3), gamma(1), delta(1), epsilon(1). F(0) has three main subunits: a(1), b(2) and c(10-14). The alpha and beta chains form an alternating ring which encloses part of the gamma chain. F(1) is attached to F(0) by a central stalk formed by the gamma and epsilon chains, while a peripheral stalk is formed by the delta and b chains.

It localises to the cell inner membrane. F(1)F(0) ATP synthase produces ATP from ADP in the presence of a proton or sodium gradient. F-type ATPases consist of two structural domains, F(1) containing the extramembraneous catalytic core and F(0) containing the membrane proton channel, linked together by a central stalk and a peripheral stalk. During catalysis, ATP synthesis in the catalytic domain of F(1) is coupled via a rotary mechanism of the central stalk subunits to proton translocation. In terms of biological role, this protein is part of the stalk that links CF(0) to CF(1). It either transmits conformational changes from CF(0) to CF(1) or is implicated in proton conduction. In Enterobacter sp. (strain 638), this protein is ATP synthase subunit delta.